The primary structure comprises 184 residues: Ribosome-recycling factor (184 aa).

This sequence belongs to the RRF family.

It is found in the cytoplasm. In terms of biological role, responsible for the release of ribosomes from messenger RNA at the termination of protein biosynthesis. May increase the efficiency of translation by recycling ribosomes from one round of translation to another. The protein is Ribosome-recycling factor of Thermoanaerobacter pseudethanolicus (strain ATCC 33223 / 39E) (Clostridium thermohydrosulfuricum).